Consider the following 714-residue polypeptide: Polyribonucleotide nucleotidyltransferase (714 aa).

Residues Asp-490 and Asp-496 each contribute to the Mg(2+) site. The KH domain maps to 556-615; it reads PRIETMQIPTDKIREVIGSGGKVIREIVEVSGAKVDINDDGIIKIASPNGDSIKKAYDMI. The region spanning 625-693 is the S1 motif domain; the sequence is GQVYTGKVVK…DRGKVRLSMK (69 aa).

The protein belongs to the polyribonucleotide nucleotidyltransferase family. Mg(2+) is required as a cofactor.

It is found in the cytoplasm. The catalysed reaction is RNA(n+1) + phosphate = RNA(n) + a ribonucleoside 5'-diphosphate. Its function is as follows. Involved in mRNA degradation. Catalyzes the phosphorolysis of single-stranded polyribonucleotides processively in the 3'- to 5'-direction. The polypeptide is Polyribonucleotide nucleotidyltransferase (Ruegeria pomeroyi (strain ATCC 700808 / DSM 15171 / DSS-3) (Silicibacter pomeroyi)).